The chain runs to 549 residues: Hydroxylamine reductase (549 aa).

Cysteine 5, cysteine 8, cysteine 17, and cysteine 23 together coordinate [4Fe-4S] cluster. Hybrid [4Fe-2O-2S] cluster contacts are provided by histidine 244, glutamate 268, cysteine 312, cysteine 403, cysteine 431, cysteine 456, glutamate 491, and lysine 493. Cysteine 403 carries the post-translational modification Cysteine persulfide.

This sequence belongs to the HCP family. [4Fe-4S] cluster is required as a cofactor. It depends on hybrid [4Fe-2O-2S] cluster as a cofactor.

The protein localises to the cytoplasm. It catalyses the reaction A + NH4(+) + H2O = hydroxylamine + AH2 + H(+). Its function is as follows. Catalyzes the reduction of hydroxylamine to form NH(3) and H(2)O. The polypeptide is Hydroxylamine reductase (Clostridium perfringens (strain 13 / Type A)).